Here is a 119-residue protein sequence, read N- to C-terminus: MARFVVVPLLVLLSLFGLEAIQHPPKIQVYSRYPADNGKPNFLNCYVSGFHPSDIEVDLLKNGKKIEKVEHSDLSFSKDWSFYLLYYTEFTPNEKDEYACRVSHVTFSTPKTVKWDRNM.

A signal peptide spans 1 to 20 (MARFVVVPLLVLLSLFGLEA). In terms of domain architecture, Ig-like C1-type spans 25–114 (PKIQVYSRYP…VTFSTPKTVK (90 aa)). Cys45 and Cys100 are disulfide-bonded.

It belongs to the beta-2-microglobulin family. In terms of assembly, heterodimer of an alpha chain and a beta chain. Beta-2-microglobulin is the beta-chain of major histocompatibility complex class I molecules.

It localises to the secreted. Functionally, component of the class I major histocompatibility complex (MHC). Involved in the presentation of peptide antigens to the immune system. In Saguinus bicolor bicolor (Pied bare-faced tamarin), this protein is Beta-2-microglobulin (B2M).